The sequence spans 122 residues: MKITRKAATQRRHRRIRRKVFGTPERPRLAVFRSHRHIYAQVIDDVAQHTLVSASTLDRELREAFKDIGTATREAAAVVGRSVAQRALQAGICQVVFDRGGKLYHGRVQALAEAAREAGLQF.

It belongs to the universal ribosomal protein uL18 family. In terms of assembly, part of the 50S ribosomal subunit; part of the 5S rRNA/L5/L18/L25 subcomplex. Contacts the 5S and 23S rRNAs.

Functionally, this is one of the proteins that bind and probably mediate the attachment of the 5S RNA into the large ribosomal subunit, where it forms part of the central protuberance. The chain is Large ribosomal subunit protein uL18 from Synechococcus sp. (strain JA-3-3Ab) (Cyanobacteria bacterium Yellowstone A-Prime).